A 170-amino-acid polypeptide reads, in one-letter code: Peptide deformylase 1 (170 aa).

Residues C91 and H133 each contribute to the Fe cation site. E134 is a catalytic residue. H137 provides a ligand contact to Fe cation.

Belongs to the polypeptide deformylase family. It depends on Fe(2+) as a cofactor.

It carries out the reaction N-terminal N-formyl-L-methionyl-[peptide] + H2O = N-terminal L-methionyl-[peptide] + formate. Its function is as follows. Removes the formyl group from the N-terminal Met of newly synthesized proteins. Requires at least a dipeptide for an efficient rate of reaction. N-terminal L-methionine is a prerequisite for activity but the enzyme has broad specificity at other positions. The chain is Peptide deformylase 1 from Vibrio vulnificus (strain CMCP6).